Reading from the N-terminus, the 126-residue chain is Protein K7 (126 aa).

Residues 24–44 traverse the membrane as a helical segment; the sequence is LPLHLWILCSLLAFLPLLVFI.

Interacts with host CAMLG; this interaction allows efficient apoptosis inhibition. Additionally, interacts with vGPCR/ORF74 and induces its proteasomeal degradation.

It localises to the host membrane. It is found in the host mitochondrion. Functionally, plays a role in the inhibition of host apoptosis to allow completion of the viral lytic replication and may thus favor the maintenance of persistent infection in infected host. The sequence is that of Protein K7 (K7) from Homo sapiens (Human).